The sequence spans 496 residues: Cytosol aminopeptidase (496 aa).

Residues Lys258 and Asp263 each contribute to the Mn(2+) site. Lys270 is an active-site residue. Mn(2+) is bound by residues Asp281, Asp340, and Glu342. Residue Arg344 is part of the active site.

It belongs to the peptidase M17 family. It depends on Mn(2+) as a cofactor.

It localises to the cytoplasm. It catalyses the reaction Release of an N-terminal amino acid, Xaa-|-Yaa-, in which Xaa is preferably Leu, but may be other amino acids including Pro although not Arg or Lys, and Yaa may be Pro. Amino acid amides and methyl esters are also readily hydrolyzed, but rates on arylamides are exceedingly low.. The enzyme catalyses Release of an N-terminal amino acid, preferentially leucine, but not glutamic or aspartic acids.. Functionally, presumably involved in the processing and regular turnover of intracellular proteins. Catalyzes the removal of unsubstituted N-terminal amino acids from various peptides. The polypeptide is Cytosol aminopeptidase (pepA) (Helicobacter pylori (strain J99 / ATCC 700824) (Campylobacter pylori J99)).